We begin with the raw amino-acid sequence, 424 residues long: MATPMVEDTSSFEEDQLASMSTEDITRATRLLDNEIRILKEDAQRTNLECDSYKEKIKENQEKIKLNKQLPYLVGNIVEILEMNPEDDAEEDGANIDLDSQRKGKCVVLKTSTRQTIFLPVVGLVDPDSLKPGDLVGVNKDSYLILDTLPSEYDSRVKAMEVDEKPTEDYNDIGGLEKQIQELVEAIVLPMTHKERFEKLGVRPPKGVLLYGPPGTGKTLMARACAAQTNATFLKLAGPQLVQMFIGDGAKLVRDAFQLAKEKAPCIIFIDEIDAIGTKRFDSEVSGDREVQRTMLELLNQLDGFSSDERIKVIAATNRADILDPALMRSGRLDRKIEFPHPTEEARARILQIHSRKMNVHPDVNFEELARSTDDFNGAQLKAVCVEAGMLALRRDATEVNHEDFNEGIIQVQAKKKASLNYYA.

Residues 1–21 are disordered; it reads MATPMVEDTSSFEEDQLASMS. A2 is modified (N-acetylalanine). S19 carries the phosphoserine modification. An ATP-binding site is contributed by 212 to 219; that stretch reads GPPGTGKT. K235 is covalently cross-linked (Glycyl lysine isopeptide (Lys-Gly) (interchain with G-Cter in ubiquitin)). Position 278 is an O-acetylthreonine (T278). Residues K279 and K416 each participate in a glycyl lysine isopeptide (Lys-Gly) (interchain with G-Cter in ubiquitin) cross-link.

The protein belongs to the AAA ATPase family. Component of the 19S regulatory particle (RP/PA700) base subcomplex of the 26S proteasome. The 26S proteasome is composed of a core protease (CP), known as the 20S proteasome, capped at one or both ends by the 19S regulatory particle (RP/PA700). The RP/PA700 complex is composed of at least 17 different subunits in two subcomplexes, the base and the lid, which form the portions proximal and distal to the 20S proteolytic core, respectively. Ubiquitous.

The protein resides in the cytoplasm. It is found in the nucleus. Its function is as follows. The 26S proteasome is involved in the ATP-dependent degradation of ubiquitinated proteins. The regulatory (or ATPase) complex confers ATP dependency and substrate specificity to the 26S complex. Interacts with transit peptides of proteins targeted to the chloroplast, and may be involved in the degradation of unimported plastid protein precursors. Plays a essential role in the gametophyte development. Involved in tolerance to zinc deficiency, possibly through alleviation of oxidative stresses or processing of poly-ubiquitinated proteins. This chain is 26S proteasome regulatory subunit 6A homolog A, found in Arabidopsis thaliana (Mouse-ear cress).